The chain runs to 647 residues: UvrABC system protein C (647 aa).

Residues 16–95 (VEPGVYRFRD…IKEFDPRFNV (80 aa)) enclose the GIY-YIG domain. The 36-residue stretch at 208–243 (DRFARELEQQMNAAAAELDFERAARLRDDLGALKRA) folds into the UVR domain.

Belongs to the UvrC family. In terms of assembly, interacts with UvrB in an incision complex.

Its subcellular location is the cytoplasm. The UvrABC repair system catalyzes the recognition and processing of DNA lesions. UvrC both incises the 5' and 3' sides of the lesion. The N-terminal half is responsible for the 3' incision and the C-terminal half is responsible for the 5' incision. This is UvrABC system protein C from Mycolicibacterium paratuberculosis (strain ATCC BAA-968 / K-10) (Mycobacterium paratuberculosis).